The primary structure comprises 367 residues: Cobalt-precorrin-5B C(1)-methyltransferase (367 aa).

The protein belongs to the CbiD family.

It catalyses the reaction Co-precorrin-5B + S-adenosyl-L-methionine = Co-precorrin-6A + S-adenosyl-L-homocysteine. It functions in the pathway cofactor biosynthesis; adenosylcobalamin biosynthesis; cob(II)yrinate a,c-diamide from sirohydrochlorin (anaerobic route): step 6/10. Its function is as follows. Catalyzes the methylation of C-1 in cobalt-precorrin-5B to form cobalt-precorrin-6A. The sequence is that of Cobalt-precorrin-5B C(1)-methyltransferase from Leptospira interrogans serogroup Icterohaemorrhagiae serovar copenhageni (strain Fiocruz L1-130).